The following is a 129-amino-acid chain: 3-oxo-4,17-pregnadiene-20-carboxyl-CoA hydratase beta subunit (129 aa).

The protein belongs to the thioester dehydratase family. In terms of assembly, heterodimer composed of ChsH1 and ChsH2. Two heterodimers combine to form a heterotetramer. The complex interacts with Ltp2 via the DUF35 C-terminal region of ChsH2. The ChsH1-ChsH2-Ltp2 protein complex is composed of two protomers that form a heterohexameric structure through the Ltp2 dimerization interface.

It catalyses the reaction 3-oxochola-4,17-dien-22-oyl-CoA + H2O = 17-hydroxy-3-oxochol-4-en-22-oyl-CoA. The enzyme catalyses (2E)-octenoyl-CoA + H2O = 3-hydroxyoctanoyl-CoA. It carries out the reaction (2E)-decenoyl-CoA + H2O = 3-hydroxydecanoyl-CoA. The protein operates within steroid metabolism; cholesterol degradation. Its activity is regulated as follows. In the absence of the Ltp2 aldolase, ChsH1/ChsH2 can hydrate only about 30% of the 3-OPDC-CoA substrate. Complete turnover requires the presence of Ltp2. Its function is as follows. Involved in cholesterol side chain degradation. Catalyzes the hydration of 3-oxo-4,17-pregnadiene-20-carboxyl-CoA (3-OPDC-CoA) to form 17-hydroxy-3-oxo-4-pregnene-20-carboxyl-CoA (17-HOPC-CoA), in the modified beta-oxidation pathway for cholesterol side chain degradation. Can also use octenoyl-CoA and decenoyl-CoA, with lower efficiency. The protein is 3-oxo-4,17-pregnadiene-20-carboxyl-CoA hydratase beta subunit of Mycobacterium tuberculosis (strain ATCC 25618 / H37Rv).